The sequence spans 631 residues: Probable potassium transport system protein Kup (631 aa).

The next 12 helical transmembrane spans lie at 17–37 (IGLLIAAVGVVYGDIGTSPLY), 56–76 (ILGVLSLIFWSLIWVVSFKYM), 109–129 (MMMVVFGLFGAALFYGDSMIT), 147–167 (GLDHWIVPMALIVLVGLFLIQ), 174–194 (IGVLFGPVMVTWFLVLGALGV), 215–235 (FFIIHPGIGVAILGAVVLALT), 256–276 (WFILVLPALLLNYFGQGALVL), 288–308 (LLAPGWALLPLIGLSTMATII), 346–366 (IYIGAVNWALMAGVILLVIGF), 378–398 (VAVTGTMLCTTILVSTVMLML), 403–423 (PLLAVPLLICLLLVDGLFFAA), and 428–448 (IFQGGAFPVLAGAVLFILMTT).

The protein belongs to the HAK/KUP transporter (TC 2.A.72) family.

It is found in the cell inner membrane. The catalysed reaction is K(+)(in) + H(+)(in) = K(+)(out) + H(+)(out). Transport of potassium into the cell. Likely operates as a K(+):H(+) symporter. This chain is Probable potassium transport system protein Kup, found in Pseudomonas savastanoi pv. phaseolicola (strain 1448A / Race 6) (Pseudomonas syringae pv. phaseolicola (strain 1448A / Race 6)).